A 595-amino-acid chain; its full sequence is UvrABC system protein C (595 aa).

Residues 14–91 (SNPGCYLHKD…IQENMPKFNI (78 aa)) enclose the GIY-YIG domain. Positions 196 to 231 (DKIVNQLKAKMKDMSDQMEFERAAEYRDLIEAVSTL) constitute a UVR domain.

The protein belongs to the UvrC family. As to quaternary structure, interacts with UvrB in an incision complex.

It is found in the cytoplasm. Functionally, the UvrABC repair system catalyzes the recognition and processing of DNA lesions. UvrC both incises the 5' and 3' sides of the lesion. The N-terminal half is responsible for the 3' incision and the C-terminal half is responsible for the 5' incision. The protein is UvrABC system protein C of Streptococcus thermophilus (strain CNRZ 1066).